A 352-amino-acid chain; its full sequence is C-C chemokine receptor type 5 (352 aa).

Over 1 to 30 (MDYQVSSPTYDIDYYTSEPCQKINVKQIAA) the chain is Extracellular. At tyrosine 3 the chain carries Sulfotyrosine. O-linked (GalNAc...) serine glycosylation is found at serine 6 and serine 7. Sulfotyrosine occurs at positions 10, 14, and 15. 2 disulfides stabilise this stretch: cysteine 20/cysteine 269 and cysteine 101/cysteine 178. Residues 31–58 (RLLPPLYSLVFIFGFVGNMLVILILINC) form a helical membrane-spanning segment. The Cytoplasmic portion of the chain corresponds to 59-68 (KRLKSMTDIY). A helical transmembrane segment spans residues 69–89 (LLNLAISDLFFLLTVPFWAHY). Residues 90–102 (AAAQWDFGNTMCQ) are Extracellular-facing. Residues 103-124 (LLTGLYFIGFFSGIFFIILLTI) form a helical membrane-spanning segment. At 125-141 (DRYLAIVHAVFALKART) the chain is on the cytoplasmic side. Residues 142 to 166 (VTFGVVTSVITWVVAVFASLPGIIF) traverse the membrane as a helical segment. The Extracellular segment spans residues 167–198 (TRSQKEGLHYTCSSHFPYSQYQFWKNFQTLKI). Residues 199-218 (VILGLVLPLLVMVICYSGIL) traverse the membrane as a helical segment. At 219–235 (KTLLRCRNEKKRHRAVR) the chain is on the cytoplasmic side. Residues 236–260 (LIFTIMIVYFLFWAPYNIVLLLNTF) form a helical membrane-spanning segment. Residues 261–277 (QEFFGLNNCSSSNRLDQ) lie on the Extracellular side of the membrane. A helical transmembrane segment spans residues 278-301 (AMQVTETLGMTHCCINPIIYAFVG). Over 302 to 352 (EKFRNYLLVFFQKHIAKHFCKCCSIFQQEAPERASSVYTRSTGEQEISVGL) the chain is Cytoplasmic. S-palmitoyl cysteine attachment occurs at residues cysteine 321, cysteine 323, and cysteine 324. Phosphoserine; by BARK1 occurs at positions 336, 337, 342, and 349.

Belongs to the G-protein coupled receptor 1 family. In terms of assembly, interacts with PRAF2. Efficient ligand binding to CCL3/MIP-1alpha and CCL4/MIP-1beta requires sulfation, O-glycosylation and sialic acid modifications. Glycosylation on Ser-6 is required for efficient binding of CCL4. Interacts with GRK2. Interacts with ARRB1 and ARRB2. Interacts with CNIH4. Interacts with S100A4; this interaction stimulates T-lymphocyte chemotaxis. Post-translationally, sulfated on at least 2 of the N-terminal tyrosines. Sulfation is required for efficient binding of the chemokines, CCL3 and CCL4. Palmitoylation in the C-terminal is important for cell surface expression. In terms of processing, phosphorylation on serine residues in the C-terminal is stimulated by binding CC chemokines especially by APO-RANTES. Post-translationally, O-glycosylated, but not N-glycosylated. Ser-6 appears to be the major site even if Ser-7 may be also O-glycosylated. Also sialylated glycans present which contribute to chemokine binding. Thr-16 and Ser-17 may also be glycosylated and, if so, with small moieties such as a T-antigen.

The protein resides in the cell membrane. Receptor for a number of inflammatory CC-chemokines including CCL3/MIP-1-alpha, CCL4/MIP-1-beta and RANTES and subsequently transduces a signal by increasing the intracellular calcium ion level. May play a role in the control of granulocytic lineage proliferation or differentiation. Participates in T-lymphocyte migration to the infection site by acting as a chemotactic receptor. This Symphalangus syndactylus (Siamang) protein is C-C chemokine receptor type 5 (CCR5).